Consider the following 427-residue polypeptide: Phosphatidylinositol 4-phosphate 5-kinase 10 (427 aa).

Residues 1–419 (MFTREITAKD…RFQDFVSQIF (419 aa)) form the PIPK domain. 2 disordered regions span residues 247-287 (SRGS…DSEN) and 334-355 (MKIPGRARRVGRGESGSVVGKQ). Residues 379–400 (YGVRKRLEHCYKSIQHSSKTIS) form an activation loop region.

It carries out the reaction a 1,2-diacyl-sn-glycero-3-phospho-(1D-myo-inositol 4-phosphate) + ATP = a 1,2-diacyl-sn-glycero-3-phospho-(1D-myo-inositol-4,5-bisphosphate) + ADP + H(+). The polypeptide is Phosphatidylinositol 4-phosphate 5-kinase 10 (PIP5K10) (Arabidopsis thaliana (Mouse-ear cress)).